The primary structure comprises 545 residues: CWF19-like protein 1 homolog (545 aa).

The segment at Y306–P329 is disordered.

Belongs to the CWF19 family.

This Drosophila melanogaster (Fruit fly) protein is CWF19-like protein 1 homolog.